A 257-amino-acid chain; its full sequence is UPF0246 protein Shewana3_3143 (257 aa).

Belongs to the UPF0246 family.

The chain is UPF0246 protein Shewana3_3143 from Shewanella sp. (strain ANA-3).